A 359-amino-acid polypeptide reads, in one-letter code: MSEQQQNITDLTLTELQQALSLLGEPAFRATQIHQWLFSHHAASFEEMTILSLALRKKLSESFSIHPLKRVEHQECFEEDCESPTEKILLELQDKSRVESVLIATENRRTACVSSQIGCPLQCPFCATGQMGFRRNLTAGEITGQIYALNELVGAKEPGKSLTNIVFMGMGEPLLNTGNVIEAIETLSTRNYRFCLSQKRITISTVGVIPEIQRLGKSGMKTKLAVSLHAADQQKRESLMPIASRQYPLKELGTALSEYTQSTGMPVTIVYLLLKGINDSLDDAKMLARFSKTFLCKINLIDYNSIINIKFKPVYSATRDMFQQYLINSGLHVTIRKSYGTTINAACGQLATASMQNPQ.

Residue E99 is the Proton acceptor of the active site. In terms of domain architecture, Radical SAM core spans 105-342 (TENRRTACVS…VTIRKSYGTT (238 aa)). The cysteines at positions 112 and 347 are disulfide-linked. [4Fe-4S] cluster contacts are provided by C119, C123, and C126. Residues 171–172 (GE), S204, 227–229 (SLH), and N304 contribute to the S-adenosyl-L-methionine site. C347 functions as the S-methylcysteine intermediate in the catalytic mechanism.

It belongs to the radical SAM superfamily. RlmN family. [4Fe-4S] cluster serves as cofactor.

Its subcellular location is the cytoplasm. The enzyme catalyses adenosine(2503) in 23S rRNA + 2 reduced [2Fe-2S]-[ferredoxin] + 2 S-adenosyl-L-methionine = 2-methyladenosine(2503) in 23S rRNA + 5'-deoxyadenosine + L-methionine + 2 oxidized [2Fe-2S]-[ferredoxin] + S-adenosyl-L-homocysteine. The catalysed reaction is adenosine(37) in tRNA + 2 reduced [2Fe-2S]-[ferredoxin] + 2 S-adenosyl-L-methionine = 2-methyladenosine(37) in tRNA + 5'-deoxyadenosine + L-methionine + 2 oxidized [2Fe-2S]-[ferredoxin] + S-adenosyl-L-homocysteine. Functionally, specifically methylates position 2 of adenine 2503 in 23S rRNA and position 2 of adenine 37 in tRNAs. The protein is Probable dual-specificity RNA methyltransferase RlmN of Pelodictyon phaeoclathratiforme (strain DSM 5477 / BU-1).